Consider the following 407-residue polypeptide: Zinc finger protein 552 (407 aa).

The region spanning 14–90 (VTFEDVAVKF…PMAGVSPKKA (77 aa)) is the KRAB domain. The C2H2-type 1 zinc-finger motif lies at 91–113 (HPCEMCGPILGDILHVADHQGTH). A C2H2-type 2; degenerate zinc finger spans residues 119 to 141 (HRCEAWGNKLYDSGNFHQHQNEH). Residues Lys-176 and Lys-198 each participate in a glycyl lysine isopeptide (Lys-Gly) (interchain with G-Cter in SUMO2) cross-link. A C2H2-type 3; degenerate zinc finger spans residues 212 to 234 (YSCGGCMKHFSTKDILSQHERLL). Residues 244 to 262 (ECGKSSSKYDSFSNHQGVH) form a C2H2-type 4; degenerate zinc finger. Glycyl lysine isopeptide (Lys-Gly) (interchain with G-Cter in SUMO2) cross-links involve residues Lys-251 and Lys-266. 5 consecutive C2H2-type zinc fingers follow at residues 268-290 (YTCG…QRIH), 296-318 (YECE…QRVH), 324-346 (YECS…KRVH), 352-374 (YECS…RRVH), and 380-402 (YGCS…QRVH). A Glycyl lysine isopeptide (Lys-Gly) (interchain with G-Cter in SUMO2) cross-link involves residue Lys-308.

It belongs to the krueppel C2H2-type zinc-finger protein family.

It localises to the nucleus. Its function is as follows. May be involved in transcriptional regulation. In Homo sapiens (Human), this protein is Zinc finger protein 552 (ZNF552).